The sequence spans 666 residues: DNA ligase (666 aa).

NAD(+) contacts are provided by residues 31-35 (DYDFD), 80-81 (SL), and E111. Catalysis depends on K113, which acts as the N6-AMP-lysine intermediate. NAD(+) is bound by residues R134, E170, K285, and K309. Zn(2+)-binding residues include C403, C406, C421, and C427. The BRCT domain occupies 587-666 (VVSNKLLGKI…ESDFSALLTS (80 aa)).

This sequence belongs to the NAD-dependent DNA ligase family. LigA subfamily. Requires Mg(2+) as cofactor. It depends on Mn(2+) as a cofactor.

It carries out the reaction NAD(+) + (deoxyribonucleotide)n-3'-hydroxyl + 5'-phospho-(deoxyribonucleotide)m = (deoxyribonucleotide)n+m + AMP + beta-nicotinamide D-nucleotide.. Its function is as follows. DNA ligase that catalyzes the formation of phosphodiester linkages between 5'-phosphoryl and 3'-hydroxyl groups in double-stranded DNA using NAD as a coenzyme and as the energy source for the reaction. It is essential for DNA replication and repair of damaged DNA. This chain is DNA ligase, found in Flavobacterium psychrophilum (strain ATCC 49511 / DSM 21280 / CIP 103535 / JIP02/86).